The sequence spans 230 residues: Ribosomal RNA small subunit methyltransferase Nep1 (230 aa).

S-adenosyl-L-methionine is bound by residues Gly184, Gly189, and 205-210 (IYNKPL).

The protein belongs to the class IV-like SAM-binding methyltransferase superfamily. RNA methyltransferase NEP1 family. Homodimer.

The enzyme catalyses a pseudouridine in rRNA + S-adenosyl-L-methionine = an N(1)-methylpseudouridine in rRNA + S-adenosyl-L-homocysteine + H(+). In terms of biological role, methyltransferase involved in ribosomal biogenesis. Specifically catalyzes the N1-methylation of the pseudouridine corresponding to position 914 in M.jannaschii 16S rRNA. This Staphylothermus marinus (strain ATCC 43588 / DSM 3639 / JCM 9404 / F1) protein is Ribosomal RNA small subunit methyltransferase Nep1.